A 343-amino-acid polypeptide reads, in one-letter code: Heat-inducible transcription repressor HrcA (343 aa).

The protein belongs to the HrcA family.

Functionally, negative regulator of class I heat shock genes (grpE-dnaK-dnaJ and groELS operons). Prevents heat-shock induction of these operons. The chain is Heat-inducible transcription repressor HrcA from Thermoanaerobacter pseudethanolicus (strain ATCC 33223 / 39E) (Clostridium thermohydrosulfuricum).